A 588-amino-acid polypeptide reads, in one-letter code: Arginine--tRNA ligase (588 aa).

A 'HIGH' region motif is present at residues 129–139; the sequence is PNIAKEMHVGH.

It belongs to the class-I aminoacyl-tRNA synthetase family. Monomer.

The protein localises to the cytoplasm. It catalyses the reaction tRNA(Arg) + L-arginine + ATP = L-arginyl-tRNA(Arg) + AMP + diphosphate. The chain is Arginine--tRNA ligase from Frankia casuarinae (strain DSM 45818 / CECT 9043 / HFP020203 / CcI3).